Consider the following 333-residue polypeptide: Adenosine deaminase (333 aa).

Histidine 12 and histidine 14 together coordinate Zn(2+). Residues histidine 14, aspartate 16, and glycine 170 each contribute to the substrate site. Zn(2+) is bound at residue histidine 197. Catalysis depends on glutamate 200, which acts as the Proton donor. Aspartate 278 contributes to the Zn(2+) binding site. Residue aspartate 279 participates in substrate binding.

It belongs to the metallo-dependent hydrolases superfamily. Adenosine and AMP deaminases family. Adenosine deaminase subfamily. Zn(2+) is required as a cofactor.

It carries out the reaction adenosine + H2O + H(+) = inosine + NH4(+). The enzyme catalyses 2'-deoxyadenosine + H2O + H(+) = 2'-deoxyinosine + NH4(+). In terms of biological role, catalyzes the hydrolytic deamination of adenosine and 2-deoxyadenosine. The chain is Adenosine deaminase from Shigella flexneri serotype 5b (strain 8401).